The primary structure comprises 132 residues: Phosphoribosyl-AMP cyclohydrolase (132 aa).

Position 76 (Asp-76) interacts with Mg(2+). A Zn(2+)-binding site is contributed by Cys-77. Residues Asp-78 and Asp-80 each coordinate Mg(2+). Zn(2+)-binding residues include Cys-93 and Cys-100.

This sequence belongs to the PRA-CH family. In terms of assembly, homodimer. Mg(2+) is required as a cofactor. Requires Zn(2+) as cofactor.

Its subcellular location is the cytoplasm. The enzyme catalyses 1-(5-phospho-beta-D-ribosyl)-5'-AMP + H2O = 1-(5-phospho-beta-D-ribosyl)-5-[(5-phospho-beta-D-ribosylamino)methylideneamino]imidazole-4-carboxamide. It participates in amino-acid biosynthesis; L-histidine biosynthesis; L-histidine from 5-phospho-alpha-D-ribose 1-diphosphate: step 3/9. Catalyzes the hydrolysis of the adenine ring of phosphoribosyl-AMP. This Methanobrevibacter smithii (strain ATCC 35061 / DSM 861 / OCM 144 / PS) protein is Phosphoribosyl-AMP cyclohydrolase.